Reading from the N-terminus, the 525-residue chain is Keratin, type II cytoskeletal 4 (525 aa).

Positions 1–145 are head; it reads MIARQSSVRG…DPEIQKIRTA (145 aa). Arg13 is subject to Omega-N-methylarginine. The segment at 146-181 is coil 1A; the sequence is EREQIKTLNNKFASFIDKVRFLEQQNKVLETKWNLL. The 314-residue stretch at 146–459 folds into the IF rod domain; the sequence is EREQIKTLNN…KLLEGEECRM (314 aa). The linker 1 stretch occupies residues 182-200; that stretch reads QQQTTTTSPKSLDPFFETY. A coil 1B region spans residues 201–292; it reads INALRKNLDT…VLYEAELAQM (92 aa). A linker 12 region spans residues 293-316; that stretch reads QTHVSDTSVVLSMDNNRNLDLDGI. The tract at residues 317–455 is coil 2; sequence IAEVRAQYED…ATYRKLLEGE (139 aa). The tract at residues 456 to 524 is tail; it reads ECRMSGECKS…SSATITKRSP (69 aa).

Belongs to the intermediate filament family. In terms of assembly, heterotetramer of two type I and two type II keratins. Keratin-4 is generally associated with keratin-13. As to expression, expressed in the dorsal and ventral epithelium of the tongue. Highest expression levels are detected in the suprabasal layer with low levels detected in the basal cell layer. Within the suprabasal layer expression is highest in the spinous cells, decreases in the granular cells and is not detected in the stratum corneum.

The chain is Keratin, type II cytoskeletal 4 (Krt4) from Mus musculus (Mouse).